The following is a 216-amino-acid chain: ATP-dependent Clp protease proteolytic subunit 3 (216 aa).

The active-site Nucleophile is the Ser-120. His-145 is an active-site residue.

The protein belongs to the peptidase S14 family. Fourteen ClpP subunits assemble into 2 heptameric rings which stack back to back to give a disk-like structure with a central cavity, resembling the structure of eukaryotic proteasomes.

The protein resides in the cytoplasm. It catalyses the reaction Hydrolysis of proteins to small peptides in the presence of ATP and magnesium. alpha-casein is the usual test substrate. In the absence of ATP, only oligopeptides shorter than five residues are hydrolyzed (such as succinyl-Leu-Tyr-|-NHMec, and Leu-Tyr-Leu-|-Tyr-Trp, in which cleavage of the -Tyr-|-Leu- and -Tyr-|-Trp bonds also occurs).. In terms of biological role, cleaves peptides in various proteins in a process that requires ATP hydrolysis. Has a chymotrypsin-like activity. Plays a major role in the degradation of misfolded proteins. The sequence is that of ATP-dependent Clp protease proteolytic subunit 3 from Prochlorococcus marinus (strain SARG / CCMP1375 / SS120).